The primary structure comprises 431 residues: MSRVEAAAAEVKVRQHNALYLLSALCMVFMTLVVAIQPLFLRNVLNISFETAGAVNANVQVVTEVLDLFIFAYLGYLSDRIGRVRIIVAGFLVAAIGAVIAPLSPWIGGASIGALVVYYVSRVIMSAGSGAVWPQLSALAGDFSDDDTRARLMSNTAFMMAFGVTLVYAVLMQIPAHAGIAVTMLLTAAVSLAGAWLAGKFLVDVAPRTQETSVPWRAVWSLVKAEPRLRLAFASSLFARSDMVFVGLFLMLWFIYFADLIKVGQAEAAARAGILIGLMGAVVMLSIPVWRSFIEHFGRIQAVLLGMVLSALGFIMLGFIINPFDWFIVLPILLIASGQAGCFVAPQILTVDYAPRDLLGSVLGAFNVIGCIGIIFFVQVGGFLFDYVGPPAPFVFTGVGNLIISAYALRLLKREARDGGGDDAPGDDGVA.

A run of 11 helical transmembrane segments spans residues 21-41 (LLSALCMVFMTLVVAIQPLFL), 57-77 (ANVQVVTEVLDLFIFAYLGYL), 86-106 (IIVAGFLVAAIGAVIAPLSPW), 107-127 (IGGASIGALVVYYVSRVIMSA), 156-176 (TAFMMAFGVTLVYAVLMQIPA), 178-198 (AGIAVTMLLTAAVSLAGAWLA), 243-263 (MVFVGLFLMLWFIYFADLIKV), 274-294 (ILIGLMGAVVMLSIPVWRSFI), 302-321 (AVLLGMVLSALGFIMLGFII), 358-378 (LLGSVLGAFNVIGCIGIIFFV), and 380-400 (VGGFLFDYVGPPAPFVFTGVG).

The protein belongs to the major facilitator superfamily.

It localises to the magnetosome membrane. In terms of biological role, required for correct biomineralization of the magnetosome; probably transports some form of iron. Partially functionally redundant with MamZ. In Paramagnetospirillum magneticum (strain ATCC 700264 / AMB-1) (Magnetospirillum magneticum), this protein is Magnetosome protein MamH (mamH).